Here is a 297-residue protein sequence, read N- to C-terminus: 33 kDa chaperonin (297 aa).

Intrachain disulfides connect Cys-232–Cys-234 and Cys-266–Cys-269.

This sequence belongs to the HSP33 family. Under oxidizing conditions two disulfide bonds are formed involving the reactive cysteines. Under reducing conditions zinc is bound to the reactive cysteines and the protein is inactive.

The protein resides in the cytoplasm. Functionally, redox regulated molecular chaperone. Protects both thermally unfolding and oxidatively damaged proteins from irreversible aggregation. Plays an important role in the bacterial defense system toward oxidative stress. This Pseudomonas paraeruginosa (strain DSM 24068 / PA7) (Pseudomonas aeruginosa (strain PA7)) protein is 33 kDa chaperonin.